A 444-amino-acid polypeptide reads, in one-letter code: tRNA (guanine-N(7)-)-methyltransferase non-catalytic subunit TRM82 (444 aa).

7 WD repeats span residues 1 to 47 (MSVI…WSDD), 48 to 99 (FDKI…LGAP), 100 to 147 (PIYS…KRFC), 148 to 192 (FSKR…EPIL), 193 to 237 (GHVS…DKWL), 238 to 279 (FGHK…STFD), and 308 to 354 (FAVS…ITFP). Residues 55-92 (RNTTAKEQQGQSSENENENKKLKSNKGDSIKRTAAKVP) are disordered. Residues 71–85 (NENKKLKSNKGDSIK) are compositionally biased toward basic and acidic residues. Residue Ser-93 is modified to Phosphoserine.

Belongs to the WD repeat TRM82 family. In terms of assembly, forms a heterodimer with the catalytic subunit TRM8.

Its subcellular location is the nucleus. Its pathway is tRNA modification; N(7)-methylguanine-tRNA biosynthesis. In terms of biological role, required for the formation of N(7)-methylguanine at position 46 (m7G46) in tRNA, a modification required to maintain stability of tRNAs; its absence resulting in tRNA decay. In the complex, it is required to stabilize and induce conformational changes of the catalytic subunit. This chain is tRNA (guanine-N(7)-)-methyltransferase non-catalytic subunit TRM82, found in Saccharomyces cerevisiae (strain RM11-1a) (Baker's yeast).